The primary structure comprises 128 residues: Nucleoside diphosphate kinase B (128 aa).

At methionine 1 the chain carries N-acetylmethionine. Positions 9, 39, 70, 81, and 91 each coordinate ATP. Catalysis depends on histidine 94, which acts as the Pros-phosphohistidine intermediate.

The protein belongs to the NDK family. It depends on Mg(2+) as a cofactor.

The protein localises to the cytoplasm. It is found in the nucleus. Its subcellular location is the cell projection. It localises to the lamellipodium. The protein resides in the ruffle. The catalysed reaction is a 2'-deoxyribonucleoside 5'-diphosphate + ATP = a 2'-deoxyribonucleoside 5'-triphosphate + ADP. The enzyme catalyses a ribonucleoside 5'-diphosphate + ATP = a ribonucleoside 5'-triphosphate + ADP. Major role in the synthesis of nucleoside triphosphates other than ATP. This chain is Nucleoside diphosphate kinase B (nme2), found in Merluccius bilinearis (Silver hake).